An 839-amino-acid polypeptide reads, in one-letter code: A disintegrin and metalloproteinase with thrombospondin motifs 4 (839 aa).

Positions 1–51 (MSHMDSHPGRGLADGWLWGIQPRLLLPTVPVSGSRLVWLLLLASLLPSAWP) are cleaved as a signal peptide. The propeptide occupies 52–212 (ASPLPREEEI…PSPSPRRAKR (161 aa)). The N-linked (GlcNAc...) asparagine glycan is linked to asparagine 68. Positions 166 to 209 (EGGAPNSAGGPGAHILRRKSPVSGQGPMCNVKAPPGKPSPSPRR) are disordered. Residues 192–199 (PMCNVKAP) carry the Cysteine switch motif. Cysteine 194 contributes to the Zn(2+) binding site. Residues 218–428 (RFVETLVVAD…GFGHCLLDKP (211 aa)) enclose the Peptidase M12B domain. 11 disulfide bridges follow: cysteine 293-cysteine 345, cysteine 322-cysteine 327, cysteine 339-cysteine 423, cysteine 377-cysteine 407, cysteine 449-cysteine 472, cysteine 460-cysteine 482, cysteine 467-cysteine 501, cysteine 495-cysteine 506, cysteine 532-cysteine 569, cysteine 536-cysteine 574, and cysteine 547-cysteine 559. Histidine 361 contacts Zn(2+). The active site involves glutamate 362. Zn(2+) is bound by residues histidine 365 and histidine 371. Residues 437–519 (TFPGKDYDAD…DQLQAFNVPQ (83 aa)) form the Disintegrin domain. A TSP type-1 domain is found at 520 to 575 (AGGWGPWGSWGDCSRSCGGGVQFSSRDCTRPVPRNGGKYCEGRRTRFRSCNTQDCP). Residues 686–839 (SKQSGSFKKF…LRRRSWAGRK (154 aa)) form a spacer region.

Interacts with SRPX2. Zn(2+) serves as cofactor. In terms of processing, the precursor is cleaved by a furin endopeptidase. Post-translationally, glycosylated. Can be O-fucosylated by POFUT2 on a serine or a threonine residue found within the consensus sequence C1-X(2)-(S/T)-C2-G of the TSP type-1 repeat domains where C1 and C2 are the first and second cysteine residue of the repeat, respectively. Fucosylated repeats can then be further glycosylated by the addition of a beta-1,3-glucose residue by the glucosyltransferase, B3GALTL. Fucosylation mediates the efficient secretion of ADAMTS family members. Can also be C-glycosylated with one or two mannose molecules on tryptophan residues within the consensus sequence W-X-X-W of the TPRs, and N-glycosylated. These other glycosylations can also facilitate secretion.

The protein resides in the secreted. It is found in the extracellular space. Its subcellular location is the extracellular matrix. It catalyses the reaction Glutamyl endopeptidase. Bonds cleaved include 370-Thr-Glu-Gly-Glu-|-Ala-Arg-Gly-Ser-377 in the interglobular domain of mammalian aggrecan.. In terms of biological role, cleaves aggrecan, a cartilage proteoglycan, at the '392-Glu-|-Ala-393' site and may be involved in its turnover. Also cleaves COMP. May play an important role in the destruction of aggrecan in arthritic diseases. In Bos taurus (Bovine), this protein is A disintegrin and metalloproteinase with thrombospondin motifs 4 (ADAMTS4).